Reading from the N-terminus, the 110-residue chain is Toxin HigB-2 (110 aa).

Functionally, toxic component of a type II toxin-antitoxin (TA) system. Inhibits translation by cleavage of mRNA. The chain is Toxin HigB-2 (higB-2) from Vibrio cholerae serotype O1 (strain ATCC 39315 / El Tor Inaba N16961).